Reading from the N-terminus, the 78-residue chain is Large ribosomal subunit protein bL28 (78 aa).

A disordered region spans residues 1-25; sequence MSRVCQVTGKRPTVGNNRSHAKNAT.

It belongs to the bacterial ribosomal protein bL28 family.

The protein is Large ribosomal subunit protein bL28 of Tolumonas auensis (strain DSM 9187 / NBRC 110442 / TA 4).